An 84-amino-acid polypeptide reads, in one-letter code: Toxin BmKaTx16 (84 aa).

A signal peptide spans 1-19; sequence MNYLVMISFALLLMTGVES. The 63-residue stretch at 21–83 folds into the LCN-type CS-alpha/beta domain; it reads RDAYIAKPHN…VPIRVPGKCH (63 aa). Disulfide bonds link cysteine 31/cysteine 82, cysteine 35/cysteine 55, cysteine 41/cysteine 65, and cysteine 45/cysteine 67. A propeptide (removed by a carboxypeptidase) is located at residue arginine 84.

It belongs to the long (4 C-C) scorpion toxin superfamily. Sodium channel inhibitor family. Alpha subfamily. As to expression, expressed by the venom gland.

Its subcellular location is the secreted. In terms of biological role, alpha toxins bind voltage-independently at site-3 of sodium channels (Nav) and inhibit the inactivation of the activated channels, thereby blocking neuronal transmission. The chain is Toxin BmKaTx16 from Olivierus martensii (Manchurian scorpion).